The primary structure comprises 325 residues: Adenine deaminase (325 aa).

3 residues coordinate Zn(2+): His-8, His-10, and His-186. Residue Glu-189 is the Proton donor of the active site. Asp-267 lines the Zn(2+) pocket. Position 268 (Asp-268) interacts with substrate.

It belongs to the metallo-dependent hydrolases superfamily. Adenosine and AMP deaminases family. Adenine deaminase type 2 subfamily. Zn(2+) is required as a cofactor.

It carries out the reaction adenine + H2O + H(+) = hypoxanthine + NH4(+). Its function is as follows. Catalyzes the hydrolytic deamination of adenine to hypoxanthine. Plays an important role in the purine salvage pathway and in nitrogen catabolism. The protein is Adenine deaminase of Chelativorans sp. (strain BNC1).